The following is a 40-amino-acid chain: Photosystem II reaction center protein J (40 aa).

A helical transmembrane segment spans residues 8 to 28; the sequence is IPLWVIGTVAGILVIGIIGIF.

Belongs to the PsbJ family. As to quaternary structure, PSII is composed of 1 copy each of membrane proteins PsbA, PsbB, PsbC, PsbD, PsbE, PsbF, PsbH, PsbI, PsbJ, PsbK, PsbL, PsbM, PsbT, PsbX, PsbY, PsbZ, Psb30/Ycf12, at least 3 peripheral proteins of the oxygen-evolving complex and a large number of cofactors. It forms dimeric complexes.

The protein resides in the plastid. It is found in the chloroplast thylakoid membrane. Its function is as follows. One of the components of the core complex of photosystem II (PSII). PSII is a light-driven water:plastoquinone oxidoreductase that uses light energy to abstract electrons from H(2)O, generating O(2) and a proton gradient subsequently used for ATP formation. It consists of a core antenna complex that captures photons, and an electron transfer chain that converts photonic excitation into a charge separation. This Lobularia maritima (Sweet alyssum) protein is Photosystem II reaction center protein J.